The primary structure comprises 207 residues: Large ribosomal subunit protein uL4 (207 aa).

Positions 43–52 (NKRQGTQSAK) are enriched in polar residues. Residues 43 to 72 (NKRQGTQSAKTRAEVRGGGRKPWKQKGTGR) are disordered. The segment covering 60 to 71 (GGRKPWKQKGTG) has biased composition (basic residues).

This sequence belongs to the universal ribosomal protein uL4 family. As to quaternary structure, part of the 50S ribosomal subunit.

In terms of biological role, one of the primary rRNA binding proteins, this protein initially binds near the 5'-end of the 23S rRNA. It is important during the early stages of 50S assembly. It makes multiple contacts with different domains of the 23S rRNA in the assembled 50S subunit and ribosome. Functionally, forms part of the polypeptide exit tunnel. This is Large ribosomal subunit protein uL4 from Alkaliphilus metalliredigens (strain QYMF).